A 93-amino-acid chain; its full sequence is Transcription factor RADIALIS (93 aa).

The SANT domain maps to 6–61; the sequence is GSGRPWSAKENKAFERALAVYDKDTPDRWANVARAVEGRTPEEVKKHYEILVEDIK.

Specifically expressed in the dorsal region of developing flowers.

The protein localises to the nucleus. Its function is as follows. Involved in the dorsovental asymmetry of flowers. Promotes dorsal identity. The polypeptide is Transcription factor RADIALIS (RAD) (Antirrhinum majus (Garden snapdragon)).